The primary structure comprises 557 residues: CDP-diacylglycerol--glycerol-3-phosphate 3-phosphatidyltransferase, mitochondrial (557 aa).

The N-terminal 25 residues, 1-25, are a transit peptide targeting the mitochondrion; the sequence is MAAAGGAALWRRLAAWLPRGPPGLA. 121–128 provides a ligand contact to ATP; sequence ASLYLGTG. The PLD phosphodiesterase 1 domain maps to 212–238; the sequence is TIGLQHIKVYLFDDNVILSGANLSDLY. Catalysis depends on residues His-217, Lys-219, and Asp-224. Positions 322 to 346 are disordered; the sequence is TFHSSQQGSSMLPQHDSEASEGLKP. Positions 323–333 are enriched in polar residues; that stretch reads FHSSQQGSSML. Residues 336 to 346 are compositionally biased toward basic and acidic residues; the sequence is HDSEASEGLKP. The region spanning 461-494 is the PLD phosphodiesterase 2 domain; that stretch reads AGWTFHAKGLWLYLAGSSLPCLTLIGSPNFGYRS.

It belongs to the CDP-alcohol phosphatidyltransferase class-II family.

It is found in the mitochondrion. It catalyses the reaction a CDP-1,2-diacyl-sn-glycerol + sn-glycerol 3-phosphate = a 1,2-diacyl-sn-glycero-3-phospho-(1'-sn-glycero-3'-phosphate) + CMP + H(+). Its pathway is phospholipid metabolism; phosphatidylglycerol biosynthesis; phosphatidylglycerol from CDP-diacylglycerol: step 1/2. Its activity is regulated as follows. Activated by calcium and magnesium and inhibited by other bivalent cations. Functionally, functions in the biosynthesis of the anionic phospholipids phosphatidylglycerol and cardiolipin. In Gallus gallus (Chicken), this protein is CDP-diacylglycerol--glycerol-3-phosphate 3-phosphatidyltransferase, mitochondrial (PGS1).